We begin with the raw amino-acid sequence, 496 residues long: MFESAEVGHSIDKDTYEKAVIELREALLEAQFELKQQARFPVIILINGIEGAGKGETVKLLNEWMDPRLIEVQSFLRPSDEELERPPQWRFWRRLPPKGRTGIFFGNWYSQMLYARVEGHIKEAKLDQAIDAAERFERMLCDEGALLFKFWFHLSKKQLKERLKALEKDPQHSWKLSPLDWKQSEVYDRFVHYGERVLRRTSRDYAPWYVVEGADERYRALTVGRILLEGLQAALATKERAKRQPHAAPLVSSLDNRGLLDSLDLGQYLDKDAYKEQLAAEQARLAGLIRDKRFRQHSLVAVFEGNDAAGKGGAIRRVTDALDPRQYHIVPIAAPTEEERAQPYLWRFWRHIPARRQFTIFDRSWYGRVLVERIEGFCAPADWLRAYGEINDFEEQLSEYGIIVVKFWLAIDKQTQMERFKEREKTPYKRYKITEEDWRNRDKWDQYVDAVGDMVDRTSTEIAPWTLVEANDKRFARVKVLRTINDAIEAAYKKDK.

PPK2 stretches follow at residues 11 to 234 (IDKD…LQAA) and 269 to 495 (LDKD…YKKD).

Belongs to the polyphosphate kinase 2 (PPK2) family. Class II subfamily. Homodimer. The cofactor is Mg(2+).

It catalyses the reaction [phosphate](n) + ADP = [phosphate](n+1) + AMP. Uses inorganic polyphosphate (polyP) as a donor to convert AMP to ADP. Can also convert GMP to GDP, with lower efficiency. Cannot dephosphorylate ADP in the presence of polyP. This is Polyphosphate:AMP phosphotransferase from Pseudomonas aeruginosa (strain ATCC 15692 / DSM 22644 / CIP 104116 / JCM 14847 / LMG 12228 / 1C / PRS 101 / PAO1).